The primary structure comprises 154 residues: SsrA-binding protein (154 aa).

It belongs to the SmpB family.

Its subcellular location is the cytoplasm. Its function is as follows. Required for rescue of stalled ribosomes mediated by trans-translation. Binds to transfer-messenger RNA (tmRNA), required for stable association of tmRNA with ribosomes. tmRNA and SmpB together mimic tRNA shape, replacing the anticodon stem-loop with SmpB. tmRNA is encoded by the ssrA gene; the 2 termini fold to resemble tRNA(Ala) and it encodes a 'tag peptide', a short internal open reading frame. During trans-translation Ala-aminoacylated tmRNA acts like a tRNA, entering the A-site of stalled ribosomes, displacing the stalled mRNA. The ribosome then switches to translate the ORF on the tmRNA; the nascent peptide is terminated with the 'tag peptide' encoded by the tmRNA and targeted for degradation. The ribosome is freed to recommence translation, which seems to be the essential function of trans-translation. This is SsrA-binding protein from Treponema pallidum (strain Nichols).